A 442-amino-acid chain; its full sequence is Meiosis-specific with OB domain-containing protein (442 aa).

Positions 167 to 272 (IINVLAAVKS…EANILLNFIR (106 aa)) form a DNA-binding region, OB.

This sequence belongs to the MEIOB family. Component of a multiprotein complex with RPA2 and SPATA22. Interacts with SPATA22. Interacts with the complex BRME1:HSF2BP:BRCA2. As to expression, in fetal gonads, specifically expressed in the ovary starting at the 14th weeks post fertilization. In the adult, restricted to testis.

The protein localises to the cytoplasm. Its subcellular location is the nucleus. It localises to the chromosome. In terms of biological role, single-stranded DNA-binding protein required for homologous recombination in meiosis I. Required for double strand breaks (DSBs) repair and crossover formation and promotion of faithful and complete synapsis. Not required for the initial loading of recombinases but required to maintain a proper number of RAD51 and DMC1 foci after the zygotene stage. May act by ensuring the stabilization of recombinases, which is required for successful homology search and meiotic recombination. Displays Single-stranded DNA 3'-5' exonuclease activity in vitro. This Homo sapiens (Human) protein is Meiosis-specific with OB domain-containing protein.